The following is a 181-amino-acid chain: Adenylyl-sulfate kinase (181 aa).

20 to 27 (GLSGAGKS) is a binding site for ATP. S94 (phosphoserine intermediate) is an active-site residue.

The protein belongs to the APS kinase family.

It carries out the reaction adenosine 5'-phosphosulfate + ATP = 3'-phosphoadenylyl sulfate + ADP + H(+). The protein operates within sulfur metabolism; hydrogen sulfide biosynthesis; sulfite from sulfate: step 2/3. Functionally, catalyzes the synthesis of activated sulfate. The chain is Adenylyl-sulfate kinase from Deinococcus deserti (strain DSM 17065 / CIP 109153 / LMG 22923 / VCD115).